We begin with the raw amino-acid sequence, 615 residues long: TANK-binding kinase 1-binding protein 1 (615 aa).

A homodimerization region spans residues 1 to 279 (MESMFEDDIS…QDLASNQSER (279 aa)). Residues 48–162 (YGDIKERLGG…ALVETHLRQI (115 aa)) are a coiled coil. Ser184 carries the post-translational modification Phosphoserine. Residues 221 to 276 (VSDLERRRLEEALEAAQGEARGAQLREEQLQAECERLQGELKQLQETRAQDLASNQ) are a coiled coil. An interaction with TBK1 and IKBKE region spans residues 280–329 (DMAWVKRVGDDQVNLALAYTELTEELGRLRELSSLQGRILRTLLQEQARS). Positions 326–458 (QARSGGQRHS…SHHVKAGFQG (133 aa)) are disordered. The span at 345–365 (PQCPSPSPPARAAPPCPPCQS) shows a compositional bias: pro residues. 6 positions are modified to phosphoserine: Ser365, Ser372, Ser379, Ser385, Ser400, and Ser415. Residues 389 to 406 (PSCPSPVPQRRSPVPPSC) are compositionally biased toward pro residues. A compositionally biased stretch (pro residues) spans 416 to 435 (PVPPSCPAPQPRPPPPPPPG). A phosphoserine mark is found at Ser504 and Ser534. The UBZ1-type zinc finger occupies 583–609 (IRSCPLCQLGFPVGYPDDALIKHIDSH). Residues Cys586, Cys589, His605, and His609 each coordinate Zn(2+).

In terms of assembly, homodimer. May form a heterodimer with NAP1. Interacts with TKB1 and IKBKE. Weakly interacts with DDX3X. As to quaternary structure, (Microbial infection) Interacts with vaccinia virus protein C6. As to expression, detected in leukocytes, lung, placenta, small intestine, liver, kidney, spleen, muscle, heart, brain and at low levels in thymus.

Functionally, adapter protein which constitutively binds TBK1 and IKBKE playing a role in antiviral innate immunity. The protein is TANK-binding kinase 1-binding protein 1 of Homo sapiens (Human).